The primary structure comprises 128 residues: Infection structure-specific protein 56 (128 aa).

2 stretches are compositionally biased toward polar residues: residues 27–36 (HATYPQSQPH) and 87–101 (TSISASQHQRQDSQS). Disordered stretches follow at residues 27–48 (HATYPQSQPHATKRSFGPAVPS) and 86–128 (GTSI…STSA). The segment covering 115–128 (KDAKKELKDPSTSA) has biased composition (basic and acidic residues).

Functionally, general role in the development of germlings including formation of the infection structures. In Uromyces appendiculatus (Rust fungus), this protein is Infection structure-specific protein 56 (INF56).